The primary structure comprises 55 residues: Large ribosomal subunit protein bL33 (55 aa).

It belongs to the bacterial ribosomal protein bL33 family.

This Rhizobium johnstonii (strain DSM 114642 / LMG 32736 / 3841) (Rhizobium leguminosarum bv. viciae) protein is Large ribosomal subunit protein bL33.